Consider the following 158-residue polypeptide: 2-C-methyl-D-erythritol 2,4-cyclodiphosphate synthase (158 aa).

A divalent metal cation contacts are provided by Asp8 and His10. Residues 8–10 (DVH) and 34–35 (HS) each bind 4-CDP-2-C-methyl-D-erythritol 2-phosphate. His42 provides a ligand contact to a divalent metal cation. Residues 56–58 (DIG), 61–65 (FPDTD), 100–106 (AQRPKMA), 132–135 (TTEE), Phe139, and Arg142 contribute to the 4-CDP-2-C-methyl-D-erythritol 2-phosphate site.

The protein belongs to the IspF family. Homotrimer. The cofactor is a divalent metal cation.

It carries out the reaction 4-CDP-2-C-methyl-D-erythritol 2-phosphate = 2-C-methyl-D-erythritol 2,4-cyclic diphosphate + CMP. It participates in isoprenoid biosynthesis; isopentenyl diphosphate biosynthesis via DXP pathway; isopentenyl diphosphate from 1-deoxy-D-xylulose 5-phosphate: step 4/6. Functionally, involved in the biosynthesis of isopentenyl diphosphate (IPP) and dimethylallyl diphosphate (DMAPP), two major building blocks of isoprenoid compounds. Catalyzes the conversion of 4-diphosphocytidyl-2-C-methyl-D-erythritol 2-phosphate (CDP-ME2P) to 2-C-methyl-D-erythritol 2,4-cyclodiphosphate (ME-CPP) with a corresponding release of cytidine 5-monophosphate (CMP). The sequence is that of 2-C-methyl-D-erythritol 2,4-cyclodiphosphate synthase from Pelobacter propionicus (strain DSM 2379 / NBRC 103807 / OttBd1).